The chain runs to 182 residues: UPF0397 protein BCG9842_B2659 (182 aa).

5 helical membrane-spanning segments follow: residues 9 to 29 (VVAI…GFSI), 40 to 60 (AILT…IGLI), 71 to 91 (WGIW…MGLI), 114 to 134 (ITGL…DIIV), and 142 to 162 (IVIQ…VLGL).

It belongs to the UPF0397 family.

The protein localises to the cell membrane. The protein is UPF0397 protein BCG9842_B2659 of Bacillus cereus (strain G9842).